Here is a 108-residue protein sequence, read N- to C-terminus: Parvalbumin beta (108 aa).

EF-hand domains lie at 38–73 (KPTD…FCSS) and 77–108 (LSNA…LVRS). Residues Asp-51, Asp-53, Ser-55, Tyr-57, Glu-59, Glu-62, Asp-90, Asp-92, Asp-94, Lys-96, and Glu-101 each contribute to the Ca(2+) site.

This sequence belongs to the parvalbumin family.

In terms of biological role, in muscle, parvalbumin is thought to be involved in relaxation after contraction. It binds two calcium ions. This Amphiuma means (Salamander) protein is Parvalbumin beta.